A 434-amino-acid polypeptide reads, in one-letter code: Citrate synthase (434 aa).

Active-site residues include His310 and Asp368.

This sequence belongs to the citrate synthase family.

The catalysed reaction is oxaloacetate + acetyl-CoA + H2O = citrate + CoA + H(+). The protein operates within carbohydrate metabolism; tricarboxylic acid cycle; isocitrate from oxaloacetate: step 1/2. This is Citrate synthase (gltA) from Bradyrhizobium diazoefficiens (strain JCM 10833 / BCRC 13528 / IAM 13628 / NBRC 14792 / USDA 110).